Reading from the N-terminus, the 488-residue chain is UDP-N-acetylmuramate--L-alanine ligase (488 aa).

Residue 129 to 135 participates in ATP binding; it reads GSHGKTT.

Belongs to the MurCDEF family.

Its subcellular location is the cytoplasm. The catalysed reaction is UDP-N-acetyl-alpha-D-muramate + L-alanine + ATP = UDP-N-acetyl-alpha-D-muramoyl-L-alanine + ADP + phosphate + H(+). Its pathway is cell wall biogenesis; peptidoglycan biosynthesis. Cell wall formation. The protein is UDP-N-acetylmuramate--L-alanine ligase of Prochlorococcus marinus (strain MIT 9303).